Reading from the N-terminus, the 84-residue chain is Sulfur carrier protein TusA (84 aa).

Cys21 (cysteine persulfide intermediate) is an active-site residue.

This sequence belongs to the sulfur carrier protein TusA family.

The protein localises to the cytoplasm. Sulfur carrier protein which probably makes part of a sulfur-relay system. The sequence is that of Sulfur carrier protein TusA from Pseudomonas syringae pv. syringae (strain B728a).